Here is a 610-residue protein sequence, read N- to C-terminus: Diol dehydratase-reactivating factor large subunit (610 aa).

Position 11 to 13 (11 to 13) interacts with ATP; it reads NSS. Mg(2+)-binding residues include Thr105, Asp166, and Asp183. ATP is bound by residues 459 to 462, 557 to 558, and Arg591; these read EEIK and GS.

This sequence belongs to the DdrA/PduG family. Component of the DDR complex, a heterotetramer of DdrA(2)/DdrB(2). The DDR complex interacts with the diol dehydratase complex in the presence of ADP but not ATP. It depends on Mg(2+) as a cofactor.

It catalyses the reaction ATP + H2O = ADP + phosphate + H(+). Large subunit of the diol dehydratase-reactivating factor (DDR), which reactivates suicidally inhibited adenosylcobalamin-dependent diol dehydratase (DD, pddA, pddB, pddC). DDR acts as a chaperone, reactivating inactivated DD holoenzyme in the presence of ATP, Mg(2+) and free adenosylcobalamin (AdoCbl), by mediating the exchange of the tightly bound damaged cofactor AdoCbl for a free intact one. Reactivation takes place in two steps: ADP-dependent cobalamin release, then ATP-dependent dissociation of the DD apoenzyme-DDR complex. DDR has weak ATPase activity which is required for DD reactivation. This subunit contains the adenosine nucleotide binding site. Activates glycerol-inactivated, O2-inactivated holoenzyme and inactivated enzyme-cyanocobalamin complex. Also reactivates glycerol-inactivated hologlycerol dehydratase, a DD isozyme. The polypeptide is Diol dehydratase-reactivating factor large subunit (Klebsiella michiganensis (strain ATCC 8724 / DSM 4798 / JCM 20051 / NBRC 3318 / NRRL B-199 / KCTC 1686 / BUCSAV 143 / CCM 1901)).